A 108-amino-acid chain; its full sequence is MDNQHRKIAGYRELTQDDIDLMNRVKAVGAELLALQAALAGRLSTDLEVKQAAAKASKLAPEHESSPECVELRRFLAAEPLRWAAIAKTDIQTGVMALVRAIAQPEGC.

The 3',3'-cGAMP site is built by Gln4, Tyr11, and Lys26.

The protein belongs to the Acb2 family. Homohexamer in apo and 3',3'-cGAMP-bound form.

Functionally, antagonizes CBASS (cyclic oligonucleotide-based antiphage signaling system). Binds and sequesters host-produced 3',3'-cyclic GMP-AMP (cGAMP) (thus preventing host CapV activation) without degrading the cyclic nucleotide. Probably binds some other cyclic dinucleotides as well. The polypeptide is Anti-CBASS protein 2 (Pseudomonas phage JBD67).